The primary structure comprises 215 residues: Large ribosomal subunit protein uL1 (215 aa).

It belongs to the universal ribosomal protein uL1 family. In terms of assembly, part of the 50S ribosomal subunit.

Its function is as follows. Binds directly to 23S rRNA. Probably involved in E site tRNA release. Functionally, protein L1 is also a translational repressor protein, it controls the translation of its operon by binding to its mRNA. This Staphylothermus marinus (strain ATCC 43588 / DSM 3639 / JCM 9404 / F1) protein is Large ribosomal subunit protein uL1.